We begin with the raw amino-acid sequence, 163 residues long: Ribonuclease P protein component (163 aa).

The disordered stretch occupies residues 1–68 (MDEKDVATQP…GGKLLSLKGD (68 aa)). The span at 8 to 19 (TQPQETGQNPRL) shows a compositional bias: polar residues.

It belongs to the RnpA family. As to quaternary structure, consists of a catalytic RNA component (M1 or rnpB) and a protein subunit.

It catalyses the reaction Endonucleolytic cleavage of RNA, removing 5'-extranucleotides from tRNA precursor.. In terms of biological role, RNaseP catalyzes the removal of the 5'-leader sequence from pre-tRNA to produce the mature 5'-terminus. It can also cleave other RNA substrates such as 4.5S RNA. The protein component plays an auxiliary but essential role in vivo by binding to the 5'-leader sequence and broadening the substrate specificity of the ribozyme. The protein is Ribonuclease P protein component of Thermus thermophilus (strain ATCC BAA-163 / DSM 7039 / HB27).